The primary structure comprises 454 residues: MAIATINPATGQTVQTFIAHSQVEVNAKLDLAQETFQSFRHLPFAQRGQWLRKAADILEQRRDEWAALMTLEMGKSIPQAIAEVNKCALVCRFYADKAEEYLADEVVTTDASQSFIAYQPLGVILAVMPWNFPFWQVFRFAAPALMAGNVGLLKHASNVPQCALAIAEIFQTAGFPEGAFQTLLIGGKVASELMADDRIQAGTLTGSEPAGASFASAAAGQIKKTVLELGGSDPFIVLEDADLDQALKVAVPARMQNNGQSCIAAKRFIVQASVAEEFFQRLTKAFQALKVGDPSLSTTDIGPLATPDILADIVAQVEQTIAAGAHCRCGGQALDQPGNYYPPTLLTDVPPNAPTYRQEFFGPVALGFTVDNLEEAIALANDIPFGLGASAWTTNPENQQKLIRGIEAGAVFINGMTKSDPRIPFGGIKRSGFGRELGRMGILEFVNAKTVWIA.

NADP(+)-binding positions include 130–131 (WN), 154–157 (KHAS), and 206–207 (GS). E228 serves as the catalytic Proton acceptor. L229 is a binding site for NADP(+). Catalysis depends on C262, which acts as the Nucleophile. E359 contributes to the NADP(+) binding site.

The protein belongs to the aldehyde dehydrogenase family.

The enzyme catalyses succinate semialdehyde + NADP(+) + H2O = succinate + NADPH + 2 H(+). The protein operates within amino-acid degradation; 4-aminobutanoate degradation. Its function is as follows. Catalyzes the NADP(+) dependent oxidation of succinate semialdehyde to succinate. This is Probable succinate-semialdehyde dehydrogenase [NADP(+)] (gabD) from Synechocystis sp. (strain ATCC 27184 / PCC 6803 / Kazusa).